The sequence spans 658 residues: MAEDKPDAKSPKTGARPQGGADAGEPTTLLQRLRGTISKAVQNKVEGILQEVQKFSDNDKLYLYLQLPSGPSVGEKSSEPSLLSNEEYMYAYRWIRNHLEEHMDTCLPKQSVYDAYRKYCESLACCRPLSTANFGKIIREIFPDIKARRLGGRGQSKYCYSGIRRKTLVSMPPLPGLDLKGSESPEMGPEVSPAPRDELVEAACALTCDWAERILKRSFSSIVQVARYLLQQHLISARSAHAHVLKAGGLAEEDERAPRERSLCKSKNVVESLEGGGPKKPERPAQPPKEQEARAGTDLPGRAERKKSVIDSSVPAASKPQVNALVARLPVLLPRAPRSLITPISGTLKVATLPLPTRVGGPQTAVPIINMILPPVPTLSGAGPGPGPGLGPRFGPGPGLGPGPGPGLGAGLGPGLGPGLGAGPGPGLGAGLGAGLGLGPGRVPPRAPILPRGAENREVGISSDPRPHDKGIKRTAEVPLSEASGQDPPVKEMKHETQDTTVSEAKRKRGRPRKKPGGSGERNATPEKSAAIVNSPRSPRLLWETWGSKRENNFIGRPEGPGPGGEAERETVLVQGQQDGAVSKGERSLSSQEAKEAEDKIPPVTSKVSVIKGRIQKEALQLVKGEADAATQGNKGLKGRVLQSSLTPEHKDPKATPP.

A compositionally biased stretch (basic and acidic residues) spans 1–10 (MAEDKPDAKS). The segment at 1–28 (MAEDKPDAKSPKTGARPQGGADAGEPTT) is disordered. A2 bears the N-acetylalanine mark. Phosphoserine is present on S10. The N-terminal domain stretch occupies residues 24–89 (GEPTTLLQRL…PSLLSNEEYM (66 aa)). Residues 61–65 (LYLYL) are leucine-rich region; critical for dimer formation and for interaction with RFXAP. Positions 91-167 (AYRWIRNHLE…YCYSGIRRKT (77 aa)) form a DNA-binding region, RFX-type winged-helix. A PxLPxI/L motif; mediates interaction with RFXANK motif is present at residues 172–177 (PPLPGL). S184 carries the phosphoserine modification. Disordered regions lie at residues 250-315 (LAEE…SSVP), 382-422 (AGPG…GLGA), 443-602 (VPPR…DKIP), and 624-658 (KGEA…ATPP). The segment covering 277–309 (GPKKPERPAQPPKEQEARAGTDLPGRAERKKSV) has biased composition (basic and acidic residues). Composition is skewed to gly residues over residues 382–398 (AGPG…GPGP) and 406–422 (PGLG…GLGA). Composition is skewed to basic and acidic residues over residues 465-476 (PRPHDKGIKRTA) and 489-498 (PVKEMKHETQ). Basic residues predominate over residues 506–516 (KRKRGRPRKKP). Residues 648-658 (PEHKDPKATPP) are compositionally biased toward basic and acidic residues.

Belongs to the RFX family. As to quaternary structure, homodimer. The RFX heterotetrameric complex consists of 2 molecules of RFX5 and one each of RFXAP and RFX-B/RFXANK; with each subunit representing a separate complementation group. Interacts (via PxLPxI/L motif) with RFXANK (via ankyrin repeats); the interaction is direct. RFX forms cooperative DNA binding complexes with X2BP and CBF/NF-Y. RFX associates with CIITA to form an active transcriptional complex. Post-translationally, phosphorylated.

The protein resides in the nucleus. Functionally, activates transcription from class II MHC promoters. Recognizes X-boxes. Mediates cooperative binding between RFX and NF-Y. RFX binds the X1 box of MHC-II promoters. In Mus musculus (Mouse), this protein is DNA-binding protein Rfx5 (Rfx5).